A 389-amino-acid polypeptide reads, in one-letter code: Probable dual-specificity RNA methyltransferase RlmN (389 aa).

The Proton acceptor role is filled by glutamate 114. The region spanning 120 to 358 (QHYGLSVCVT…CVVRQEHGTD (239 aa)) is the Radical SAM core domain. A disulfide bond links cysteine 127 and cysteine 363. [4Fe-4S] cluster is bound by residues cysteine 134, cysteine 138, and cysteine 141. S-adenosyl-L-methionine contacts are provided by residues 186–187 (GE), serine 218, 241–243 (SLH), and asparagine 319. Cysteine 363 functions as the S-methylcysteine intermediate in the catalytic mechanism. The interval 370 to 389 (TMKRDRQKAVAEASGKSEGK) is disordered. Residues 371-389 (MKRDRQKAVAEASGKSEGK) are compositionally biased toward basic and acidic residues.

It belongs to the radical SAM superfamily. RlmN family. Requires [4Fe-4S] cluster as cofactor.

Its subcellular location is the cytoplasm. The enzyme catalyses adenosine(2503) in 23S rRNA + 2 reduced [2Fe-2S]-[ferredoxin] + 2 S-adenosyl-L-methionine = 2-methyladenosine(2503) in 23S rRNA + 5'-deoxyadenosine + L-methionine + 2 oxidized [2Fe-2S]-[ferredoxin] + S-adenosyl-L-homocysteine. The catalysed reaction is adenosine(37) in tRNA + 2 reduced [2Fe-2S]-[ferredoxin] + 2 S-adenosyl-L-methionine = 2-methyladenosine(37) in tRNA + 5'-deoxyadenosine + L-methionine + 2 oxidized [2Fe-2S]-[ferredoxin] + S-adenosyl-L-homocysteine. Specifically methylates position 2 of adenine 2503 in 23S rRNA and position 2 of adenine 37 in tRNAs. The protein is Probable dual-specificity RNA methyltransferase RlmN of Streptococcus thermophilus (strain ATCC BAA-250 / LMG 18311).